We begin with the raw amino-acid sequence, 406 residues long: NADH-ubiquinone oxidoreductase 49 kDa subunit (406 aa).

This sequence belongs to the complex I 49 kDa subunit family. Complex I is composed of 45 different subunits. Component of the iron-sulfur (IP) fragment of the enzyme.

The protein resides in the mitochondrion inner membrane. The enzyme catalyses a ubiquinone + NADH + 5 H(+)(in) = a ubiquinol + NAD(+) + 4 H(+)(out). Functionally, core subunit of the mitochondrial membrane respiratory chain NADH dehydrogenase (Complex I) that is believed to belong to the minimal assembly required for catalysis. Complex I functions in the transfer of electrons from NADH to the respiratory chain. The immediate electron acceptor for the enzyme is believed to be ubiquinone. The protein is NADH-ubiquinone oxidoreductase 49 kDa subunit (nad7) of Dictyostelium citrinum (Slime mold).